Consider the following 25-residue polypeptide: U1-poneritoxin-Ng1b (25 aa).

As to expression, expressed by the venom gland.

It localises to the secreted. The protein localises to the target cell membrane. In terms of biological role, has a broad spectrum of activity against both Gram-positive and Gram-negative bacteria and S.cerevisiae. Has insecticidal and hemolytic activities. May act by disrupting the integrity of the bacterial cell membrane. This chain is U1-poneritoxin-Ng1b, found in Neoponera goeldii (Ponerine ant).